We begin with the raw amino-acid sequence, 146 residues long: uncharacterized protein (146 aa).

An HTH marR-type domain is found at 1–137 (MLSQEFFNSF…TINVMNQIHE (137 aa)).

This is an uncharacterized protein from Staphylococcus aureus (strain MRSA252).